A 244-amino-acid chain; its full sequence is Tubulin-folding cofactor B (244 aa).

Residue M1 is modified to N-acetylmethionine. Residue S65 is modified to Phosphoserine; by PAK1. Phosphotyrosine is present on Y98. S110 is modified (phosphoserine). Position 128 is a phosphoserine; by PAK1 (S128). The CAP-Gly domain occupies 183–225; the sequence is GLTDFKPGYWVGVRYDEPLGKNDGSVNGKRYFECQAKYGAFVK. An N6-acetyllysine modification is found at K219.

The protein belongs to the TBCB family. Supercomplex made of cofactors A to E. Cofactors A and D function by capturing and stabilizing tubulin in a quasi-native conformation. Cofactor E binds to the cofactor D-tubulin complex; interaction with cofactor C then causes the release of tubulin polypeptides that are committed to the native state. Cofactors B and E can form a heterodimer which binds to alpha-tubulin and enhances their ability to dissociate tubulin heterodimers. Interacts with GAN. Interacts with DCTN1. In terms of processing, phosphorylation by PAK1 is required for normal function. Post-translationally, ubiquitinated in the presence of GAN which targets it for degradation by the proteasome. Widely expressed with highest levels in brain. Broadly distributed throughout the neonate brain but restricted mainly to ependymary cells in the adult brain where it is concentrated in the cilia.

The protein localises to the cytoplasm. The protein resides in the cytoskeleton. Binds to alpha-tubulin folding intermediates after their interaction with cytosolic chaperonin in the pathway leading from newly synthesized tubulin to properly folded heterodimer. Involved in regulation of tubulin heterodimer dissociation. May function as a negative regulator of axonal growth. In Mus musculus (Mouse), this protein is Tubulin-folding cofactor B (Tbcb).